The primary structure comprises 904 residues: DNA mismatch repair protein MutS (904 aa).

Glycine 655–serine 662 is a binding site for ATP.

It belongs to the DNA mismatch repair MutS family.

Functionally, this protein is involved in the repair of mismatches in DNA. It is possible that it carries out the mismatch recognition step. This protein has a weak ATPase activity. This is DNA mismatch repair protein MutS from Agrobacterium fabrum (strain C58 / ATCC 33970) (Agrobacterium tumefaciens (strain C58)).